We begin with the raw amino-acid sequence, 111 residues long: Somatostatin-1B (111 aa).

Positions 1 to 19 (MQLLSSLVSLLLVLYSVRA) are cleaved as a signal peptide. Positions 20–87 (AAVLPVEERN…RLEERAVYNR (68 aa)) are excised as a propeptide. Cysteines 100 and 111 form a disulfide.

The protein belongs to the somatostatin family.

It localises to the secreted. Somatostatin inhibits the release of somatotropin. The chain is Somatostatin-1B (sst1b) from Carassius auratus (Goldfish).